The chain runs to 158 residues: Endoribonuclease YbeY (158 aa).

Residues His114, His118, and His124 each contribute to the Zn(2+) site.

This sequence belongs to the endoribonuclease YbeY family. The cofactor is Zn(2+).

The protein localises to the cytoplasm. Functionally, single strand-specific metallo-endoribonuclease involved in late-stage 70S ribosome quality control and in maturation of the 3' terminus of the 16S rRNA. This chain is Endoribonuclease YbeY, found in Legionella pneumophila (strain Paris).